A 3242-amino-acid chain; its full sequence is MHQPPVRFTYRLLSYLISTIIAGQPLLPAVGAVITPQNGAGMDKAANGVPVVNIATPNGAGISHNRFTDYNVGKEGLILNNATGKLNPTQLGGLIQNNPNLKAGGEAKGIINEVTGGNRSLLQGYTEVAGKAANVMVANPYGITCDGCGFINTPHATLTTGRPVMNADGSLQALEVTEGSITINGAGLDGTRSDAVSIIARATEVNAALHAKDLTVTAGANRITADGRVSALKGEGDVPKVAVDTGALGGMYARRIHLTSTESGVGVNLGNLYARDGDIILSSAGKLVLKNSLAGGNTTVTGTDVSLSGDNKAGGNLSVTGTTGLTLNQPRLVTDKNLVLSSSGQIVQNGGELTAGQNAMLSAQHLNQTSGTVNAAENVTLTTTNDTTLKGRSIAGKTLTVSSGSLNNGGTLVAGRDATVKTGTFSNTGTVQGNGLKVTATDLTSTGSIKSGSTLDISARNATLSGDAGAKDSARVTVSGTLENRGRLVSDDVLTLSATQINNSGTLSGAKELVASADTLTTTEKSVTNSDGNLMLDSASSTLAGETSAGGTVSVKGNSLKTTTTAQTQGNSVSVDVQNAQLDGTQAARDILTLNASEKLTHSGKSSAPSLSLSAPELTSSGVLVGSALNTQSQTLTNSGLLQGEASLTVNTQRLDNQQNGTLYSAADLTLDIPDIRNSGLITGDNGLMLNAVSLSNPGKIIADTLSVRATTLDGDGLLQGAGALALAGDTLSQGSHGRWLTADDLSLRGKTLNTAGTTQGQNITVQADRWANSGSVLATGNLTASATGQLTSTGDIMSQGDTTLKAATTDNRGSLLSAGTLSLDGNSLDNSGTVQGDHVTIRQNSVTNSGTLTGIAALTLAARMVSPQPALMNNGGSLLTSGDLTITAGSLVNSGAIQAADSLTARLTGELVSTAGSKVTSNGEMALSALNLSNSGQWIAKNLTLKANSLTSAGDITGVDTLTLTVNQTLNNQANGKLLSAGVLTLKADSVTNDGQLQGNATTITAGQLTNGGHLQGETLTLAASGGVNNRFGGVLMSRNALNVSTATLSNQGTIQGGGGVSLNVTDRLQNDSKILSGSNLTLTAQVLANTGSGLVQAATLLLDVVNTVNGGRVLATGSADVKGTTLNNTGTLQGADLLVNYHTFSNSGTLLGTSGLGVKGSSLLQHGTGRLYSAGNLLLDAQDFSGQGQVVATGDVTLKLIAALTNHGTLAAGKTLSVTSQNAITNGGVMQGDAMVLGAGEAFTNNGMLTAGKGNSVFSAQRLFLNAPGSLQAGGDVSLNSRSDITISGFTGTAGSLTMNVAGTLLNSALIYAGNNLKLFTDRLHNQHGDILAGNSLWVQKDASGGANTEIINTSGNIETHQGDIVVRTGHLLNQREGFSATTTTRTNPSSIQGMGNALVDIPLSLLPDGSYGYFTREVENQHGTPCNGHGACNITMDTLYYYAPFADSATQRFLSSQNITTVTGADNPAGRIASGRNLSAEAERLENRASFILANGDIALSGRELSNQSWQTGTENEYLVYRYDPKTFYGSYATGSLDKLPLLSPEFENNTIRFSLDGREKDYTPGKTYYSVIQAGGDVKTRFTSSINNGTTTAHAGSVSPVVSAPVLNTLSQQTGGDSLTQTALQQYEPVVVGSPQWHDELAGALKNIAGGSPLTGQTGISDDWPLPSGNNGYLVPSTDPDSPYLITVNPKLDGLGQVDSHLFAGLYELLGAKPGQAPRETAPSYTDEKQFLGSSYFLDRLGLKPEKDYRFLGDAVFDTRYVSNAVLSRTGSRYLNGLGSDTEQMRYLMDNAARQQKGLGLEFGVALTAEQIAQLDGSILWWESATINGQTVMVPKLYLSPEDITLHNGSVISGNNVQLAGGNITNSGSSINAQNGLSLDSTGYIDNLNAGLISAGGSLDLSAIGDISNISSVISGKTVQLESVSGNISNITRRQQWNAGSDSRYGGVHLSGTDTGPVATIKGTDSLSLDAGKNIDITGATVSSGGTLGMSAGNDINIAANLISGSKSQSGFWHTDDNSASSTTSQGSSISAGGNLAMAAGHNLDVTASSVSAGHSALLSAGNDLSLNAVRESKNSRNGRSESHESHAAVSTVTAGDNLLLVAGRDVASQAAGVAAENNVVIRGGRDVNLVAESAGAGDSYTSKKKKEINETVRQQGTEIASGGDTTVNAGRDITAVASSVTATGNISVNAGRDVALTTATESDYHYLETKKKSGGFLSKKTTHTISEDSASREAGSLLSGNRVTVNAGDNLTVEGSDVVADQDVSLAAGNHVDVLAATSTDTSWRFKETKKSGLMGTGGIGFTIGSSKTTHDRREAGTTQSQSASTIGSTAGNVSITAGKQAHISGSDVIANRDISITGDSVVVDPGHDRRTVDEKFEQKKSGLTVALSGTVGSAINNAVTSAQETKESSDSRLKALQATKTALSGVQAGQAATMASATGDPNATGVSLSLTTQKSKSQQHSESDTVSGSTLNAGNNLSVVATGKNRGDNRGDIVIAGSQLKVGGNTSLDAANDILLSGAANTQKTTGRNSSSGGGVGVSIGAGGNGAGISVFAGVNAAKGSEKGNGTEWTETTTDSGKTVTINSGRDTVLNGAQVNGNRIIADVGHDLLISSQQDTSKYDSKQTSVAAGGSFTFGSMTGSGYIAASRDKMKSRFDSVAEQTGMFAGDGGFDITVGRHTQLDGAVIASTATPDKNHLDTGTLGFSDLHNEADYKVSHSGISLSGGGSFGDKFQGNMPGGMISAGGHSGHAEGTTQAAVAEGTITIRDRDNQKQNLANLSRDPAHTNDSISPIFDKEKEQRRLQTVGLISDIGSQVADIARTQGELNALKAAQDKYGPVPADATEEQRQAYLAKLRDTPEYKKEQEKYGTGSDMQRGIQAATAALQGLVGGNMAGALAGASAPELANIIGHHAGIDDNTAAKAIAHAILGGVTAALQGNSAAAGAIGAGTGEVIASAIAKSLYPGVDPSKLTEDQKQTVSTLATLSAGMAGGIASGDVAGAAAGAGAGKNVVENNALSLVARGCAVAAPCRTKVAEQLLEIGAKAGMAGLAGAAVKDMADRMTSDELEHLITLQMMGNDEITTKYLSSLHDKYGSGAASNPNIGKDLTDAEKVELGGSGSGTGTPPPSENDPKQQNEKTVDKLNQKQESAIKKIDNTIKNALKDHDIIGTLKDMDGKPVPKENGGYWDHMQEMQNTLRGLRNHADTLKNVNNPEAQAAYGRATDAINKIESALKGYGI.

A signal peptide spans 1–32; it reads MHQPPVRFTYRLLSYLISTIIAGQPLLPAVGA. The segment at 36–322 is two-partner system transport domain (TPS); the sequence is PQNGAGMDKA…AGGNLSVTGT (287 aa). The interval 351–1376 is FHA-1; sequence GELTAGQNAM…IVVRTGHLLN (1026 aa). The interval 1377–1668 is receptor-binding domain (RBD); the sequence is QREGFSATTT…TGQTGISDDW (292 aa). The interval 1668 to 1852 is YP domain; it reads WPLPSGNNGY…LSPEDITLHN (185 aa). The segment at 1853–1913 is periplasmic FHA-1 repeat (pFR); the sequence is GSVISGNNVQ…DLSAIGDISN (61 aa). An FHA-2 region spans residues 2021–2631; that stretch reads DNSASSTTSQ…TSKYDSKQTS (611 aa). Residues 2075-2091 show a composition bias toward basic and acidic residues; that stretch reads RESKNSRNGRSESHESH. Disordered regions lie at residues 2075–2094, 2310–2333, and 2439–2481; these read RESK…HAAV, GSSK…STIG, and TMAS…NAGN. Positions 2322–2333 are enriched in polar residues; it reads GTTQSQSASTIG. Residues 2969 to 3242 form a DUF638-CT domain; not toxic when added to the outside of E.coli, does not interfere with F-pilus mediated conjugation, toxic when expressed intracellularly region; sequence GVDPSKLTED…IESALKGYGI (274 aa). The tract at residues 2972-3015 is pre-toxin (PT) domain; sequence PSKLTEDQKQTVSTLATLSAGMAGGIASGDVAGAAAGAGAGKNV. Residues 3016–3019 carry the VENN CT cleavage motif motif; that stretch reads VENN. The interval 3016–3097 is toxin import domain; sufficient to import the tRNA nuclease domain of colicin E5 into E.coli, may bind F-pili; sequence VENNALSLVA…KYLSSLHDKY (82 aa). A CT domain; toxic when added to the outside of E.coli and when expressed intracellularly region spans residues 3016 to 3242; that stretch reads VENNALSLVA…IESALKGYGI (227 aa). An inner membrane translocation domain (IMTD), targets protein to FtsH region spans residues 3020–3141; sequence ALSLVARGCA…SENDPKQQNE (122 aa). The C-terminal effector domain (CT) stretch occupies residues 3020–3242; that stretch reads ALSLVARGCA…IESALKGYGI (223 aa). Residues 3098 to 3242 form a tRNase function, does not interfere with F-pilus mediated conjugation region; it reads GSGAASNPNI…IESALKGYGI (145 aa). The interval 3116 to 3146 is disordered; that stretch reads KVELGGSGSGTGTPPPSENDPKQQNEKTVDK. Basic and acidic residues predominate over residues 3134 to 3146; that stretch reads NDPKQQNEKTVDK. Positions 3137-3238 form a coiled coil; that stretch reads KQQNEKTVDK…AINKIESALK (102 aa). Active-site residues include D3170, H3193, and E3196.

It in the N-terminal section; belongs to the CdiA toxin family. The C-terminal (CT) domain interacts with cognate CdiI but not non-cognate CdiI from D.dadantii strain 3937. CdiA-CT also interacts with CysK; this is blocked upon preincubation with O-acetyl-L-serine. CysK forms a complex with CdiA-CT/CdiI. One CdiA toxin subunit binds to each subunit of the CysK homodimer, and one CdiI immunity protein binds to each toxin subunit; the immune complex is thus a dimer of trimers. The 4 C-terminal residues of CdiA fit into the active site of CysK. Requires a divalent metal cation as cofactor.

It is found in the secreted. The protein resides in the target cell membrane. Its subcellular location is the target cell. It localises to the target cell cytoplasm. Toxic component of a toxin-immunity protein module, which functions as a cellular contact-dependent growth inhibition (CDI) system. CDI modules allow bacteria to communicate with and inhibit the growth of closely related neighboring bacteria in a contact-dependent fashion (target cell counts decrease 100- to 1000-fold). CdiA toxicity is neutralized by its cognate immunity protein CdiI, but not by CdiI from other bacteria. Uses heterotrimeric OmpC and OmpF as target cell outer membrane receptors; receptor function depends on polymorphisms in extracellular loops L4 and L5 of OmpC; interacts with itself and closely related bacteria but also with OmpC from E.cloacae ATCC 13047. Its ability to preferentially bind to 'self' receptors suggests it may also play a role in self-recognition and kin selection. A bamA mutation that decreases its expression about 5-fold is partially resistant to this strain of CdiA, probably due to decreased outer membrane receptor protein assembly. Isolated CdiA-CT is imported in an F-pilus-mediated fashion; CdiA-CT inhibits F-mediated conjugation, probably via its N-terminus (residues 3016-3097), although it is not clear if this is physiologically significant. Gains access to the cytoplasm of target cells by using integral inner membrane protein FtsH. The C-terminal domain (CT) cleaves within tRNA anticodon loops; this activity is inhibited by cognate CdiI. tRNase activity of CdiA-CT is stimulated by CysK, although the extreme C-terminus (residues 3098-3242) has tRNase activity in the absence of CysK. In vivo CDI toxicity requires CysK. CysK stabilizes CdiA-CT, allowing it to bind tRNA substrate; neither CdiA-CT nor CysK bind tRNA alone in vitro. Purified CdiA-CT (residues 3016-3242) inhibits E.coli cell growth when added to cultures alone or in complex with cognate CdiI, growth is inhibited when cognate CdiI is present within the cell but not when a CdiA-CT/CdiI complex is added extracellularly, suggesting CdiA-CT alone but not the CdiA-CT/CdiI complex is imported into the target cell. Its function is as follows. The CdiA protein is thought to be exported from the cell through the central lumen of CdiB, the other half of its two-partner system (TPS). The TPS domain probably remains associated with CdiB while the FHA-1 domain forms an extended filament with the receptor-binding domain (RBD) at its extremity; in the secretion arrested state the C-terminus of the RBD and YP domains form a hairpin-like structure as the FHA-2, PT and CT domains are periplasmic. The YP domain is probably responsible for this arrest at the point where it re-enters the host cell periplasm. Upon binding to a target cell outer membrane receptor (heterotrimeric OmpC-OmpF for this CDI) a signal is transmitted to activate secretion. The filament elongates slightly, the rest of CdiA is secreted and the FHA-2 domain becomes stably associated with the target cell's outer membrane where it facilitates entry of the toxic CT domain into the target cell periplasm. From there the toxic CT domain is cleaved and gains access to the target cell cytoplasm via an inner membrane protein (FtsH for this CDI). This chain is tRNA nuclease CdiA, found in Escherichia coli O6:K15:H31 (strain 536 / UPEC).